Reading from the N-terminus, the 457-residue chain is Elongation factor 1-alpha (457 aa).

Position 2 is a n,N,N-trimethylglycine (glycine 2). Lysine 3 is subject to N6,N6-dimethyllysine; alternate. Lysine 3 carries the N6-methyllysine; alternate modification. Residues 5–240 (KTHVNVVVIG…DAIEPPVRPS (236 aa)) enclose the tr-type G domain. The tract at residues 14–21 (GHVDSGKS) is G1. Residue 14–21 (GHVDSGKS) participates in GTP binding. Lysine 30 carries the N6-methyllysine modification. The tract at residues 70 to 74 (GITID) is G2. Lysine 79 is subject to N6,N6,N6-trimethyllysine. Residues 91-94 (DAPG) form a G3 region. GTP-binding positions include 91–95 (DAPGH) and 153–156 (NKMD). Positions 153–156 (NKMD) are G4. The G5 stretch occupies residues 192 to 194 (SGW). Lysine 316 is modified (N6,N6-dimethyllysine; alternate). Lysine 316 is modified (N6-methyllysine; alternate). N6-methyllysine is present on lysine 389.

This sequence belongs to the TRAFAC class translation factor GTPase superfamily. Classic translation factor GTPase family. EF-Tu/EF-1A subfamily.

The protein localises to the cytoplasm. Its function is as follows. This protein promotes the GTP-dependent binding of aminoacyl-tRNA to the A-site of ribosomes during protein biosynthesis. This Mucor circinelloides f. lusitanicus (Mucor racemosus var. lusitanicus) protein is Elongation factor 1-alpha (TEF-3).